The sequence spans 665 residues: Transketolase 1 (665 aa).

A substrate-binding site is contributed by His26. Thiamine diphosphate is bound by residues His66 and 114 to 116 (GPL). Asp155 is a binding site for Mg(2+). Gly156 and Asn185 together coordinate thiamine diphosphate. Positions 185 and 187 each coordinate Mg(2+). Substrate-binding residues include His261, Arg358, and Ser385. His261 contacts thiamine diphosphate. Residue Glu412 is the Proton donor of the active site. Phe438 is a thiamine diphosphate binding site. Substrate is bound by residues His462, Asp470, and Arg521.

This sequence belongs to the transketolase family. Homodimer. Mg(2+) is required as a cofactor. Ca(2+) serves as cofactor. The cofactor is Mn(2+). It depends on Co(2+) as a cofactor. Requires thiamine diphosphate as cofactor.

It catalyses the reaction D-sedoheptulose 7-phosphate + D-glyceraldehyde 3-phosphate = aldehydo-D-ribose 5-phosphate + D-xylulose 5-phosphate. Its function is as follows. Catalyzes the transfer of a two-carbon ketol group from a ketose donor to an aldose acceptor, via a covalent intermediate with the cofactor thiamine pyrophosphate. This is Transketolase 1 (tkt1) from Vibrio cholerae serotype O1 (strain ATCC 39315 / El Tor Inaba N16961).